A 446-amino-acid chain; its full sequence is MAANVPPSAETLLSGAAAHPPKTAEEIANQYDLLPKLIPYLDRHLVFPLLEFSSGQDDDKEVVRAKYELLKHTNMTDYVANLWKEINNSDTIPDEFVKKREEVLAKLENYQEESSKITELLQDEAVVGNLRSDKVANLRFLEEQHGVTLDMVNSLYDYGRFQYSCGSYGTAAELLYQFRVLSTDNDKVASATWGKLASEILTTSWEGAMEEVQKVKESIETRLFNNPLGQLENRSWLIHWSLFPFFNYDPARDVLTDLFFSPAYINTIQTNCPWILRYLAAAVITNRNRAHKNSSAYQKQLKDLIRVVRQEGYEYSDPITDFVKALYIDFDFEEAQKKLGEAEDVLRSDFFLVSAADAFVEAARHLISESYCKIHQRIDIKDLSTRLGLNQDEGEKWIVNLIRDTRVDAKIDYKEGTVIMNHPPQSVYQQVIEKTKGAFFRTQVLR.

One can recognise a PCI domain in the interval 256–425 (TDLFFSPAYI…GTVIMNHPPQ (170 aa)).

The protein belongs to the eIF-3 subunit E family. As to quaternary structure, component of the eukaryotic translation initiation factor 3 (eIF-3) complex.

It localises to the cytoplasm. Its function is as follows. Component of the eukaryotic translation initiation factor 3 (eIF-3) complex, which is involved in protein synthesis of a specialized repertoire of mRNAs and, together with other initiation factors, stimulates binding of mRNA and methionyl-tRNAi to the 40S ribosome. The eIF-3 complex specifically targets and initiates translation of a subset of mRNAs involved in cell proliferation. In Aspergillus terreus (strain NIH 2624 / FGSC A1156), this protein is Eukaryotic translation initiation factor 3 subunit E (int6).